The chain runs to 147 residues: Ubiquitin-conjugating enzyme E2 D2B (147 aa).

Positions 1–147 constitute a UBC core domain; sequence MALKRIHKEL…AREWTQKYAM (147 aa). C85 functions as the Glycyl thioester intermediate in the catalytic mechanism.

It belongs to the ubiquitin-conjugating enzyme family. Interacts with CNOT4 (via RING domain). In terms of tissue distribution, testis-specific. Mainly expressed in the round spermatids (at protein level).

It catalyses the reaction S-ubiquitinyl-[E1 ubiquitin-activating enzyme]-L-cysteine + [E2 ubiquitin-conjugating enzyme]-L-cysteine = [E1 ubiquitin-activating enzyme]-L-cysteine + S-ubiquitinyl-[E2 ubiquitin-conjugating enzyme]-L-cysteine.. It functions in the pathway protein modification; protein ubiquitination. In terms of biological role, catalyzes the covalent attachment of ubiquitin to other proteins. Mediates the selective degradation of short-lived and abnormal proteins. Functions in the E6/E6-AP-induced ubiquitination of p53/TP53. Mediates ubiquitination of PEX5 and SQSTM1 and autoubiquitination of STUB1 and TRAF6. Involved in the signal-induced conjugation and subsequent degradation of NFKBIA, FBXW2-mediated GCM1 ubiquitination and degradation, MDM2-dependent degradation of p53/TP53 and the activation of MAVS in the mitochondria by RIGI in response to viral infection Plays a role in early maturation of the testis. This is Ubiquitin-conjugating enzyme E2 D2B (Ube2d2b) from Rattus norvegicus (Rat).